The primary structure comprises 164 residues: Photosystem II extrinsic protein V (164 aa).

An N-terminal signal peptide occupies residues 1–27 (MIPNRKIQLSLFAVIIVFETLLNQVYA). 4 residues coordinate heme c: C64, C67, H68, and M131.

This sequence belongs to the cytochrome c family. PsbV subfamily. As to quaternary structure, PSII is composed of 1 copy each of membrane proteins PsbA, PsbB, PsbC, PsbD, PsbE, PsbF, PsbH, PsbI, PsbJ, PsbK, PsbL, PsbM, PsbT, PsbY, PsbZ, Psb30/Ycf12, at least 3 peripheral proteins of the oxygen-evolving complex and a large number of cofactors. It forms dimeric complexes. The extrinsic subunits in red algae are PsbO (OEC33), PsbQ', cytochrome c-550 and PsbU. Heme c is required as a cofactor.

The protein resides in the plastid. The protein localises to the chloroplast thylakoid membrane. In terms of biological role, one of the extrinsic, lumenal subunits of photosystem II (PSII). PSII is a light-driven water plastoquinone oxidoreductase, using light energy to abstract electrons from H(2)O, generating a proton gradient subsequently used for ATP formation. The extrinsic proteins stabilize the structure of photosystem II oxygen-evolving complex (OEC), the ion environment of oxygen evolution and protect the OEC against heat-induced inactivation. The sequence is that of Photosystem II extrinsic protein V from Gracilaria tenuistipitata var. liui (Red alga).